A 385-amino-acid chain; its full sequence is Nuclear hormone receptor family member nhr-68 (385 aa).

The nuclear receptor DNA-binding region spans 4–79; that stretch reads KEVCLVCQDF…VGMDKTSLQA (76 aa). NR C4-type zinc fingers lie at residues 7–27 and 43–62; these read CLVC…CNGC and CQFD…CRFC. Residues 81–110 form a disordered region; that stretch reads RDPIGYTKRNKKTLRHPMNELSGDESNSCT. In terms of domain architecture, NR LBD spans 145-384; it reads PKRSLKQALC…SFAKELIFGD (240 aa). The AF-2 stretch occupies residues 373–384; the sequence is FTSFAKELIFGD.

The protein belongs to the nuclear hormone receptor family.

It is found in the nucleus. Its function is as follows. Probable transcription factor that acts in a feed-forward loop with nhr-10 to activate genes, including itself, involved in the vitamin B12-independent breakdown of the short-chain fatty acid propionate. This pathway is triggered in response to a diet low in vitamin B12, when canonical vitamin B12-dependent propionate breakdown cannot function; the resulting accumulation of propionate is probably sensed by nhr-68 and/or nhr-10. The chain is Nuclear hormone receptor family member nhr-68 from Caenorhabditis elegans.